The sequence spans 517 residues: Cytochrome P450 monooxygenase TRI4 (517 aa).

A helical membrane pass occupies residues 15–37 (AVGAAVAVGALYFFCQCFYNLYL). Asn-444 is a glycosylation site (N-linked (GlcNAc...) asparagine). Cys-452 is a heme binding site.

The protein belongs to the cytochrome P450 family. Requires heme as cofactor.

The protein resides in the membrane. It functions in the pathway sesquiterpene biosynthesis; trichothecene biosynthesis. Functionally, cytochrome P450 monooxygenase; part of the gene cluster that mediates the production of the antimicrobial trichothecene harzianum A (HA) that plays a role in Botrytis cinerea antagonistic activity and plant defense priming. The biosynthesis of harzianum A begins with the cyclization of farnesyl diphosphate to trichodiene and is catalyzed by the trichodiene synthase TRI5. Trichodiene undergoes a series of oxygenations catalyzed by the cytochrome P450 monooxygenase TRI4. TRI4 controls the addition of 3 oxygens at C-2, C-11, and the C-12, C-13-epoxide to form the intermediate isotrichodiol. Isotrichodiol then undergoes a non-enzymatic isomerization and cyclization to form 12,13-epoxytrichothec-9-ene (EPT) which is further converted to trichodermol by the cytochrome P450 monooxygenase TRI11 via C-4 hydroxylation. The last step of HA synthesis is esterification of an octatriendioyl moiety to the C-4 oxygen of trichodermol. The octatriendioyl moiety is probably produced by the polyketide synthase TRI17 and the esterification performed by the trichothecene O-acetyltransferase TRI3. This Trichoderma arundinaceum protein is Cytochrome P450 monooxygenase TRI4.